We begin with the raw amino-acid sequence, 87 residues long: Small ribosomal subunit protein bS20 (87 aa).

It belongs to the bacterial ribosomal protein bS20 family.

Its function is as follows. Binds directly to 16S ribosomal RNA. In Shigella flexneri, this protein is Small ribosomal subunit protein bS20.